The chain runs to 380 residues: Cytochrome b (380 aa).

Transmembrane regions (helical) follow at residues 34–54 (FGSL…LLAM), 78–99 (WLIR…YLHI), 114–134 (WNTG…GYVL), and 179–199 (FFAL…IHLT). The heme b site is built by H84 and H98. Residues H183 and H197 each contribute to the heme b site. H202 contacts a ubiquinone. The next 4 helical transmembrane spans lie at 227–247 (LKDI…ALFS), 289–309 (LGGV…PFLH), 321–341 (LSQL…WVGS), and 348–368 (FIII…ILFP).

The protein belongs to the cytochrome b family. As to quaternary structure, the cytochrome bc1 complex contains 11 subunits: 3 respiratory subunits (MT-CYB, CYC1 and UQCRFS1), 2 core proteins (UQCRC1 and UQCRC2) and 6 low-molecular weight proteins (UQCRH/QCR6, UQCRB/QCR7, UQCRQ/QCR8, UQCR10/QCR9, UQCR11/QCR10 and a cleavage product of UQCRFS1). This cytochrome bc1 complex then forms a dimer. It depends on heme b as a cofactor.

It localises to the mitochondrion inner membrane. Functionally, component of the ubiquinol-cytochrome c reductase complex (complex III or cytochrome b-c1 complex) that is part of the mitochondrial respiratory chain. The b-c1 complex mediates electron transfer from ubiquinol to cytochrome c. Contributes to the generation of a proton gradient across the mitochondrial membrane that is then used for ATP synthesis. The protein is Cytochrome b (MT-CYB) of Macronectes halli (Hall's giant petrel).